Here is a 429-residue protein sequence, read N- to C-terminus: Histidine--tRNA ligase (429 aa).

Belongs to the class-II aminoacyl-tRNA synthetase family. Homodimer.

The protein resides in the cytoplasm. The catalysed reaction is tRNA(His) + L-histidine + ATP = L-histidyl-tRNA(His) + AMP + diphosphate + H(+). The sequence is that of Histidine--tRNA ligase from Dechloromonas aromatica (strain RCB).